The sequence spans 291 residues: N-acetylmannosamine kinase (291 aa).

Residues 5 to 12 (AIDIGGTK) and 132 to 139 (GVGGGVVS) contribute to the ATP site. Residues His-156, Cys-166, Cys-168, and Cys-173 each coordinate Zn(2+).

It belongs to the ROK (NagC/XylR) family. NanK subfamily. Homodimer.

It carries out the reaction an N-acyl-D-mannosamine + ATP = an N-acyl-D-mannosamine 6-phosphate + ADP + H(+). It functions in the pathway amino-sugar metabolism; N-acetylneuraminate degradation; D-fructose 6-phosphate from N-acetylneuraminate: step 2/5. Its function is as follows. Catalyzes the phosphorylation of N-acetylmannosamine (ManNAc) to ManNAc-6-P. The chain is N-acetylmannosamine kinase from Escherichia coli O1:K1 / APEC.